The following is a 795-amino-acid chain: Phenylalanine--tRNA ligase beta subunit (795 aa).

A tRNA-binding domain is found at 39–148 (AGSFNGVVVG…ADAPLGTDIR (110 aa)). The region spanning 401–476 (PKRATITLRR…RVYGYNNIPD (76 aa)) is the B5 domain. Mg(2+)-binding residues include Asp-454, Asp-460, Glu-463, and Glu-464. Positions 701–794 (SRFPANRRDI…LKERFQASLR (94 aa)) constitute an FDX-ACB domain.

This sequence belongs to the phenylalanyl-tRNA synthetase beta subunit family. Type 1 subfamily. As to quaternary structure, tetramer of two alpha and two beta subunits. It depends on Mg(2+) as a cofactor.

It localises to the cytoplasm. The enzyme catalyses tRNA(Phe) + L-phenylalanine + ATP = L-phenylalanyl-tRNA(Phe) + AMP + diphosphate + H(+). The protein is Phenylalanine--tRNA ligase beta subunit of Salmonella choleraesuis (strain SC-B67).